Consider the following 182-residue polypeptide: Dihydrofolate reductase (182 aa).

The DHFR domain maps to 3–180 (RFNLIVAVCE…IKFEYKILEK (178 aa)). Residues Ala-9 and 15–21 (GIGIRGD) each bind NADP(+). 29–34 (ELKYFS) contacts substrate. 53–55 (RKT) lines the NADP(+) pocket. Residue Arg-69 participates in substrate binding. NADP(+) is bound by residues 75-77 (STT) and 113-120 (GGSGVYEE).

Belongs to the dihydrofolate reductase family. As to quaternary structure, monomer. Interacts with vg.

The enzyme catalyses (6S)-5,6,7,8-tetrahydrofolate + NADP(+) = 7,8-dihydrofolate + NADPH + H(+). It participates in cofactor biosynthesis; tetrahydrofolate biosynthesis; 5,6,7,8-tetrahydrofolate from 7,8-dihydrofolate: step 1/1. Functionally, by interacting with vestigial (vg), may control genes involved in DNA replication. Key enzyme in folate metabolism. Catalyzes an essential reaction for de novo glycine and purine synthesis, and for DNA precursor synthesis. This is Dihydrofolate reductase (Dhfr) from Drosophila melanogaster (Fruit fly).